A 1176-amino-acid polypeptide reads, in one-letter code: Myosin light chain kinase, smooth muscle (1176 aa).

The tract at residues 1–41 (MDFRANLQRQVKPKTLSEEERKVHGPQQVDFRSVLAKKGTP) is actin-binding (calcium/calmodulin-sensitive). The interval 1–354 (MDFRANLQRQ…SEKRPESRGT (354 aa)) is disordered. The tract at residues 26–41 (PQQVDFRSVLAKKGTP) is calmodulin-binding. Pro residues predominate over residues 43-55 (TPVPEKVPPPKPA). Tandem repeats lie at residues 100–111 (FLKPVGNAKLAD), 112–123 (TPKPLSSTKPAE), 124–135 (TPKPLGNVKPAE), 136–147 (TPKPLGSTKPAE), 148–159 (TPKPLGSTKPAE), 160–171 (TPKPLGNVKPAE), 172–183 (TPKPLGNIKPTE), 184–195 (TPKPLGSTKPAE), 196–207 (TPKPLGSTKPAE), 208–219 (TPKPLGNVKPAE), 220–231 (TPKPLGNVKPAE), 232–243 (TPKPLGNVKPAE), 244–255 (TPKPVSNAKPAE), 256–267 (TLKPVGNAKPAE), 268–279 (TPKPLSNVKPAE), and 280–291 (TPKLVGNAKPAE). The tract at residues 100–291 (FLKPVGNAKL…KLVGNAKPAE (192 aa)) is 16 X 12 AA tandem repeats. At serine 202 the chain carries Phosphoserine. An actin-binding (calcium/calmodulin-insensitive) region spans residues 319–721 (PTGKEELKKE…TVTVNTEQKV (403 aa)). The span at 320-335 (TGKEELKKEIKNDVNC) shows a compositional bias: basic and acidic residues. In terms of domain architecture, Ig-like C2-type 1 spans 356–444 (PTFEEKLQDL…GQAESSCQVT (89 aa)). Cysteine 377 and cysteine 428 form a disulfide bridge. The disordered stretch occupies residues 448-497 (PDAPTSENAKAPEMKARRPKSSLPPVLGTESDATVKKKPAPKTPPKAAMP). The 89-residue stretch at 498-586 (PQIIQFPEDQ…GSRQAQVNLT (89 aa)) folds into the Ig-like C2-type 2 domain. In terms of domain architecture, Fibronectin type-III spans 594–686 (PAGTPCASDI…QESELTALGE (93 aa)). The disordered stretch occupies residues 673–707 (SEPSQESELTALGEKPEEEPKDEVEVSDDDEKEPE). Over residues 688–706 (PEEEPKDEVEVSDDDEKEP) the composition is skewed to acidic residues. Serine 699 bears the Phosphoserine mark. At tyrosine 710 the chain carries Phosphotyrosine; by ABL1. The 256-residue stretch at 725–980 (YDIEERLGSG…CTQCLQHPWL (256 aa)) folds into the Protein kinase domain. ATP-binding positions include 731–739 (LGSGKFGQV) and lysine 754. Residue tyrosine 836 is modified to Phosphotyrosine; by ABL1. Catalysis depends on aspartate 846, which acts as the Proton acceptor. The residue at position 896 (tyrosine 896) is a Phosphotyrosine; by ABL1. A calmodulin-binding region spans residues 972 to 1035 (TQCLQHPWLM…SGLSGRKSST (64 aa)). Serine 1020, serine 1021, serine 1033, serine 1034, and serine 1037 each carry phosphoserine. Threonine 1039 carries the post-translational modification Phosphothreonine. Serine 1040 carries the phosphoserine modification. In terms of domain architecture, Ig-like C2-type 3 spans 1069–1158 (PYFSKTIRDL…GEATCTAELI (90 aa)). Residues cysteine 1090 and cysteine 1142 are joined by a disulfide bond.

Belongs to the protein kinase superfamily. CAMK Ser/Thr protein kinase family. All isoforms including Telokin bind calmodulin. Interacts with SVIL. Interacts with CTTN; this interaction is reduced during thrombin-induced endothelial cell (EC) contraction but is promoted by the barrier-protective agonist sphingosine 1-phosphate (S1P) within lamellipodia. A complex made of ABL1, CTTN and MYLK regulates cortical actin-based cytoskeletal rearrangement critical to sphingosine 1-phosphate (S1P)-mediated endothelial cell (EC) barrier enhancement. Binds to NAA10/ARD1 and PTK2B/PYK2. The cofactor is Mg(2+). It depends on Ca(2+) as a cofactor. The C-terminus is deglutamylated by AGTPBP1/CCP1, AGBL1/CCP4 and AGBL4/CCP6, leading to the formation of Myosin light chain kinase, smooth muscle, deglutamylated form. The consequences of C-terminal deglutamylation are unknown. In terms of processing, can probably be down-regulated by phosphorylation. Tyrosine phosphorylation by ABL1 increases kinase activity, reverses MLCK-mediated inhibition of Arp2/3-mediated actin polymerization, and enhances CTTN-binding. Phosphorylation by SRC promotes CTTN binding.

The protein localises to the cytoplasm. Its subcellular location is the cell projection. The protein resides in the lamellipodium. It localises to the cleavage furrow. It is found in the cytoskeleton. The protein localises to the stress fiber. The catalysed reaction is L-seryl-[myosin light chain] + ATP = O-phospho-L-seryl-[myosin light chain] + ADP + H(+). The enzyme catalyses L-threonyl-[myosin light chain] + ATP = O-phospho-L-threonyl-[myosin light chain] + ADP + H(+). Functionally, calcium/calmodulin-dependent myosin light chain kinase implicated in smooth muscle contraction via phosphorylation of myosin light chains (MLC). Also regulates actin-myosin interaction through a non-kinase activity. Phosphorylates PTK2B/PYK2 and myosin light-chains. Involved in the inflammatory response (e.g. apoptosis, vascular permeability, leukocyte diapedesis), cell motility and morphology, airway hyperreactivity and other activities relevant to asthma. Required for tonic airway smooth muscle contraction that is necessary for physiological and asthmatic airway resistance. Necessary for gastrointestinal motility. Implicated in the regulation of endothelial as well as vascular permeability, probably via the regulation of cytoskeletal rearrangements. In the nervous system it has been shown to control the growth initiation of astrocytic processes in culture and to participate in transmitter release at synapses formed between cultured sympathetic ganglion cells. Critical participant in signaling sequences that result in fibroblast apoptosis. Plays a role in the regulation of epithelial cell survival. Required for epithelial wound healing, especially during actomyosin ring contraction during purse-string wound closure. Mediates RhoA-dependent membrane blebbing. Triggers TRPC5 channel activity in a calcium-dependent signaling, by inducing its subcellular localization at the plasma membrane. Promotes cell migration (including tumor cells) and tumor metastasis. PTK2B/PYK2 activation by phosphorylation mediates ITGB2 activation and is thus essential to trigger neutrophil transmigration during acute lung injury (ALI). May regulate optic nerve head astrocyte migration. Probably involved in mitotic cytoskeletal regulation. Regulates tight junction probably by modulating ZO-1 exchange in the perijunctional actomyosin ring. Mediates burn-induced microvascular barrier injury; triggers endothelial contraction in the development of microvascular hyperpermeability by phosphorylating MLC. Essential for intestinal barrier dysfunction. Mediates Giardia spp.-mediated reduced epithelial barrier function during giardiasis intestinal infection via reorganization of cytoskeletal F-actin and tight junctional ZO-1. Necessary for hypotonicity-induced Ca(2+) entry and subsequent activation of volume-sensitive organic osmolyte/anion channels (VSOAC) in cervical cancer cells. This is Myosin light chain kinase, smooth muscle (MYLK) from Bos taurus (Bovine).